The primary structure comprises 887 residues: Alanine--tRNA ligase (887 aa).

The Zn(2+) site is built by His573, His577, Cys676, and His680.

It belongs to the class-II aminoacyl-tRNA synthetase family. Requires Zn(2+) as cofactor.

Its subcellular location is the cytoplasm. The enzyme catalyses tRNA(Ala) + L-alanine + ATP = L-alanyl-tRNA(Ala) + AMP + diphosphate. In terms of biological role, catalyzes the attachment of alanine to tRNA(Ala) in a two-step reaction: alanine is first activated by ATP to form Ala-AMP and then transferred to the acceptor end of tRNA(Ala). Also edits incorrectly charged Ser-tRNA(Ala) and Gly-tRNA(Ala) via its editing domain. The polypeptide is Alanine--tRNA ligase (Corynebacterium jeikeium (strain K411)).